The sequence spans 458 residues: tRNA-2-methylthio-N(6)-dimethylallyladenosine synthase (458 aa).

An MTTase N-terminal domain is found at 2–118 (PKLYIKTYGC…VFEHVDGILR (117 aa)). Positions 11, 47, 81, 170, 174, and 177 each coordinate [4Fe-4S] cluster. Residues 156-389 (PGVRSTAYVS…LAVVNEIAIR (234 aa)) enclose the Radical SAM core domain. The 64-residue stretch at 392–455 (RDLVGTVQEV…GFTLYGVPCP (64 aa)) folds into the TRAM domain.

The protein belongs to the methylthiotransferase family. MiaB subfamily. In terms of assembly, monomer. It depends on [4Fe-4S] cluster as a cofactor.

The protein resides in the cytoplasm. The catalysed reaction is N(6)-dimethylallyladenosine(37) in tRNA + (sulfur carrier)-SH + AH2 + 2 S-adenosyl-L-methionine = 2-methylsulfanyl-N(6)-dimethylallyladenosine(37) in tRNA + (sulfur carrier)-H + 5'-deoxyadenosine + L-methionine + A + S-adenosyl-L-homocysteine + 2 H(+). Catalyzes the methylthiolation of N6-(dimethylallyl)adenosine (i(6)A), leading to the formation of 2-methylthio-N6-(dimethylallyl)adenosine (ms(2)i(6)A) at position 37 in tRNAs that read codons beginning with uridine. This is tRNA-2-methylthio-N(6)-dimethylallyladenosine synthase from Akkermansia muciniphila (strain ATCC BAA-835 / DSM 22959 / JCM 33894 / BCRC 81048 / CCUG 64013 / CIP 107961 / Muc).